Reading from the N-terminus, the 93-residue chain is RNA silencing suppressor (93 aa).

The tract at residues C44 to R47 is basic. The C4-type zinc-finger motif lies at C54–C69.

Belongs to the carlaviruses nucleic acid-binding protein family.

Functionally, suppressor of viral-induced RNA silencing. The potential mechanism of action is based on sequestering siRNAs. The protein is RNA silencing suppressor of Solanum tuberosum (Potato).